The sequence spans 632 residues: MTHEFTESYDVIVIGAGHAGVEASLATSRMGCKTLLATINLDMLAFMPCNPSIGGSAKGIVVREIDALGGEMSKNIDKTYIQMKMLNTGKGPAVRALRAQADKSLYAREMKHTVEKQANLTLRQTMIDDILVEDGRVVGVLTATGQKFAAKAVVVTTGTALRGEIILGELKYSSGPNNSLASVTLADNLKKLGLEIGRFKTGTPPRVKASSINYDQTEIQPGDDKPNHFSFMSKDADYLKDQIPCWLTYTNQTSHDIINQNLYRAPMFSGIVKGVGPRYCPSIEDKIVRFADKERHQLFLEPEGRDTEEVYVQGLSTSLPEDVQKDLIHSIKGLEKAEMMRTGYAIEYDIVLPHQLRATLETKLISGLFTAGQTNGTSGYEEAAGQGLIAGINAALKVQGKPELILKRSDAYIGVMIDDLVTKGTLEPYRLLTSRAEYRLILRHDNADMRLTEIGRDIGLVDDERWKAFEIKKNQFDNELKRLNSIKLKPVKATNDRVQELGFKPLTDAMTAKEFMRRPEIDYATAVSFVGPAAEDLDAKIIELLETEIKYEGYIRKALDQVAKMKRMEEKRIPANIDWDAIDSIATEARQKFKKINPETIGQASRISGVNPADISILMIYLEGNGKAHRKY.

FAD contacts are provided by residues 15 to 20, Ile127, and Ser182; that span reads GAGHAG. 276 to 290 provides a ligand contact to NAD(+); that stretch reads GPRYCPSIEDKIVRF. Gln373 contacts FAD.

Belongs to the MnmG family. Homodimer. Heterotetramer of two MnmE and two MnmG subunits. FAD is required as a cofactor.

Its subcellular location is the cytoplasm. In terms of biological role, NAD-binding protein involved in the addition of a carboxymethylaminomethyl (cmnm) group at the wobble position (U34) of certain tRNAs, forming tRNA-cmnm(5)s(2)U34. This chain is tRNA uridine 5-carboxymethylaminomethyl modification enzyme MnmG, found in Streptococcus pyogenes serotype M18 (strain MGAS8232).